The following is a 728-amino-acid chain: Putative ankyrin repeat protein L271 (728 aa).

ANK repeat units follow at residues 142-171 (SDVNVIYWTSKQNYIDATKYLISIGANIKT) and 173-198 (IYSASKFGNLDLIISIIDGKNKDIIL). Low complexity predominate over residues 244 to 267 (STKSTKSSGSPKSIKPKKSNQNNN). Residues 244-271 (STKSTKSSGSPKSIKPKKSNQNNNAKIN) form a disordered region. Residues 292 to 338 (TVDKMSSAKEQALNVYKEIENMENFILNKINITKKKALDKIKEIENI) adopt a coiled-coil conformation. ANK repeat units follow at residues 358–383 (TNTDTITQAIISENLNSLDLLIRQGY), 384–414 (DINKILYLACINNKKNVIDYLIDNKGANYEQ), 477–510 (DDLSPIMVACRASKNDDQLDLVKMLVSYGFNINS), 514–543 (IGRSALHYAVNGSNRKIIEYLLALGADYSF), 547–576 (NGDTPMMLAKKSNNLELLDLFQSVPKDTKT), 594–626 (DIKTAMSICLSSINDNQFESVQKLIMSGFNVSS), 630–659 (TKKTLLHMAVVNNNLRIVELLINSGININS), and 663–696 (LGKTPLMLACQYSHRDSKLAIVEFLLNNNAKILI).

This Acanthamoeba polyphaga (Amoeba) protein is Putative ankyrin repeat protein L271.